The sequence spans 134 residues: DNA-binding protein inhibitor ID-2 (134 aa).

Phosphoserine is present on residues Ser14 and Ser25. Residues 23–75 (SRSKTPVDDPMSLLYNMNDCYSKLKELVPSIPQNKKVTKMEILQHVIDYILDL) form the bHLH domain. Residues 30–83 (DDPMSLLYNMNDCYSKLKELVPSIPQNKKVTKMEILQHVIDYILDLQIALDSHP) form an interaction with IFI204 region. A Nuclear export signal motif is present at residues 106–115 (LNTDISILSL).

Interacts with GATA4 and NKX2-5. Interacts with NR0B2. Interacts with CLOCK and BMAL1. Interacts with IFI204. Interacts with NEDD9/HEF1. Interacts with ASB4; this interaction promotes ID2 proteasomal degradation. In terms of processing, polyubiquitinated; which is favored by Ifi204 and leads to proteasomal degradation. Ubiquitinated in a ASB4-depedent manner, leading to proteasomal degradation. Post-translationally, phosphorylated in vitro by CDK1, PKA and PKC.

The protein resides in the cytoplasm. It is found in the nucleus. Its function is as follows. Transcriptional regulator (lacking a basic DNA binding domain) which negatively regulates the basic helix-loop-helix (bHLH) transcription factors by forming heterodimers and inhibiting their DNA binding and transcriptional activity. Implicated in regulating a variety of cellular processes, including cellular growth, senescence, differentiation, apoptosis, angiogenesis, and neoplastic transformation. Inhibits skeletal muscle and cardiac myocyte differentiation. Regulates the circadian clock by repressing the transcriptional activator activity of the CLOCK-BMAL1 heterodimer. Restricts the CLOCK and BMAL1 localization to the cytoplasm. Plays a role in both the input and output pathways of the circadian clock: in the input component, is involved in modulating the magnitude of photic entrainment and in the output component, contributes to the regulation of a variety of liver clock-controlled genes involved in lipid metabolism. In Mus musculus (Mouse), this protein is DNA-binding protein inhibitor ID-2 (Id2).